Reading from the N-terminus, the 138-residue chain is Small ribosomal subunit protein uS11c (138 aa).

A disordered region spans residues 1 to 22 (MTKPIPRIGSRRNGRIGSRKNA). A compositionally biased stretch (basic residues) spans 9 to 22 (GSRRNGRIGSRKNA).

It belongs to the universal ribosomal protein uS11 family. In terms of assembly, part of the 30S ribosomal subunit.

It localises to the plastid. It is found in the chloroplast. The chain is Small ribosomal subunit protein uS11c from Dioscorea elephantipes (Elephant's foot yam).